We begin with the raw amino-acid sequence, 875 residues long: Probable ubiquitin carboxyl-terminal hydrolase 7 (875 aa).

The UBP-type zinc finger occupies 54–167 (KECSHLKKGV…RDVQQFICSN (114 aa)). Zn(2+) contacts are provided by cysteine 56, histidine 58, cysteine 83, cysteine 86, cysteine 101, cysteine 104, cysteine 109, histidine 116, histidine 120, histidine 127, cysteine 140, and cysteine 143. The USP domain occupies 208-875 (PGLKNLGATC…EAYMLFYERV (668 aa)). Cysteine 217 (nucleophile) is an active-site residue. Residues serine 333 and serine 337 each carry the phosphoserine modification. The segment at 396–486 (YSKELSQSSD…ASPKKEVLKS (91 aa)) is disordered. Residues 401 to 438 (SQSSDSSQHQHDSFLPANSSPLAASSTKSLPSSELLDS) are compositionally biased toward low complexity. A compositionally biased stretch (basic and acidic residues) spans 473 to 484 (NHEEASPKKEVL). Phosphoserine occurs at positions 486 and 493. Residues 575–586 (RSRFSRSPKKSS) show a composition bias toward basic residues. Residues 575-628 (RSRFSRSPKKSSVKIVVDNANDDTDQAPTTNSSSLNENLLGGHASENDKSLKQS) are disordered. Over residues 600–611 (QAPTTNSSSLNE) the composition is skewed to polar residues. Serine 645 is modified (phosphoserine). The active-site Proton acceptor is histidine 812.

It belongs to the peptidase C19 family.

It carries out the reaction Thiol-dependent hydrolysis of ester, thioester, amide, peptide and isopeptide bonds formed by the C-terminal Gly of ubiquitin (a 76-residue protein attached to proteins as an intracellular targeting signal).. The protein is Probable ubiquitin carboxyl-terminal hydrolase 7 (ubp7) of Schizosaccharomyces pombe (strain 972 / ATCC 24843) (Fission yeast).